Consider the following 355-residue polypeptide: Protein RecA (355 aa).

67 to 74 (GPESSGKT) contacts ATP.

This sequence belongs to the RecA family.

It is found in the cytoplasm. Functionally, can catalyze the hydrolysis of ATP in the presence of single-stranded DNA, the ATP-dependent uptake of single-stranded DNA by duplex DNA, and the ATP-dependent hybridization of homologous single-stranded DNAs. It interacts with LexA causing its activation and leading to its autocatalytic cleavage. The protein is Protein RecA of Shewanella halifaxensis (strain HAW-EB4).